The sequence spans 288 residues: NH(3)-dependent NAD(+) synthetase (288 aa).

46–53 (GISGGQDS) contacts ATP. Aspartate 52 lines the Mg(2+) pocket. Arginine 153 is a binding site for deamido-NAD(+). Residue threonine 173 participates in ATP binding. Glutamate 178 is a Mg(2+) binding site. Deamido-NAD(+)-binding residues include lysine 186 and aspartate 193. Lysine 202 and threonine 224 together coordinate ATP. 273–274 (HK) is a deamido-NAD(+) binding site.

It belongs to the NAD synthetase family. Homodimer.

The enzyme catalyses deamido-NAD(+) + NH4(+) + ATP = AMP + diphosphate + NAD(+) + H(+). The protein operates within cofactor biosynthesis; NAD(+) biosynthesis; NAD(+) from deamido-NAD(+) (ammonia route): step 1/1. In terms of biological role, catalyzes the ATP-dependent amidation of deamido-NAD to form NAD. Uses ammonia as a nitrogen source. The polypeptide is NH(3)-dependent NAD(+) synthetase (Deinococcus geothermalis (strain DSM 11300 / CIP 105573 / AG-3a)).